Reading from the N-terminus, the 107-residue chain is Nucleoid-associated protein BMEA_A0033 (107 aa).

This sequence belongs to the YbaB/EbfC family. Homodimer.

It localises to the cytoplasm. Its subcellular location is the nucleoid. In terms of biological role, binds to DNA and alters its conformation. May be involved in regulation of gene expression, nucleoid organization and DNA protection. This chain is Nucleoid-associated protein BMEA_A0033, found in Brucella melitensis biotype 2 (strain ATCC 23457).